The chain runs to 474 residues: Pyruvate kinase (474 aa).

Residue arginine 37 coordinates substrate. Residues asparagine 39, serine 41, and aspartate 71 each contribute to the K(+) site. ATP is bound at residue 39–42; that stretch reads NFSH. ATP-binding residues include arginine 78 and lysine 160. Residue glutamate 222 coordinates Mg(2+). Residues glycine 245, aspartate 246, and threonine 278 each contribute to the substrate site. Residue aspartate 246 coordinates Mg(2+).

Belongs to the pyruvate kinase family. In terms of assembly, homotetramer. It depends on Mg(2+) as a cofactor. K(+) is required as a cofactor.

The catalysed reaction is pyruvate + ATP = phosphoenolpyruvate + ADP + H(+). It participates in carbohydrate degradation; glycolysis; pyruvate from D-glyceraldehyde 3-phosphate: step 5/5. This is Pyruvate kinase (ttuE) from Agrobacterium vitis (Rhizobium vitis).